We begin with the raw amino-acid sequence, 207 residues long: FMN-dependent NADH:quinone oxidoreductase 3 (207 aa).

Residues Ser10 and 16–18 (SIS) each bind FMN.

Belongs to the azoreductase type 1 family. In terms of assembly, homodimer. The cofactor is FMN.

It catalyses the reaction 2 a quinone + NADH + H(+) = 2 a 1,4-benzosemiquinone + NAD(+). It carries out the reaction N,N-dimethyl-1,4-phenylenediamine + anthranilate + 2 NAD(+) = 2-(4-dimethylaminophenyl)diazenylbenzoate + 2 NADH + 2 H(+). Its function is as follows. Quinone reductase that provides resistance to thiol-specific stress caused by electrophilic quinones. Also exhibits azoreductase activity. Catalyzes the reductive cleavage of the azo bond in aromatic azo compounds to the corresponding amines. This chain is FMN-dependent NADH:quinone oxidoreductase 3, found in Burkholderia lata (strain ATCC 17760 / DSM 23089 / LMG 22485 / NCIMB 9086 / R18194 / 383).